The chain runs to 202 residues: Glycerol-3-phosphate acyltransferase (202 aa).

Helical transmembrane passes span 11-31, 87-107, 116-136, and 158-178; these read ALIA…GLIL, PALA…WLGF, FIGV…AIWL, and VILW…LAAL.

It belongs to the PlsY family. Probably interacts with PlsX.

It localises to the cell inner membrane. The enzyme catalyses an acyl phosphate + sn-glycerol 3-phosphate = a 1-acyl-sn-glycero-3-phosphate + phosphate. It participates in lipid metabolism; phospholipid metabolism. Functionally, catalyzes the transfer of an acyl group from acyl-phosphate (acyl-PO(4)) to glycerol-3-phosphate (G3P) to form lysophosphatidic acid (LPA). This enzyme utilizes acyl-phosphate as fatty acyl donor, but not acyl-CoA or acyl-ACP. In Methylorubrum populi (strain ATCC BAA-705 / NCIMB 13946 / BJ001) (Methylobacterium populi), this protein is Glycerol-3-phosphate acyltransferase.